The following is a 192-amino-acid chain: Fe/S biogenesis protein NfuA (192 aa).

[4Fe-4S] cluster-binding residues include C150 and C153.

It belongs to the NfuA family. Homodimer. The cofactor is [4Fe-4S] cluster.

Its function is as follows. Involved in iron-sulfur cluster biogenesis. Binds a 4Fe-4S cluster, can transfer this cluster to apoproteins, and thereby intervenes in the maturation of Fe/S proteins. Could also act as a scaffold/chaperone for damaged Fe/S proteins. The protein is Fe/S biogenesis protein NfuA of Ruthia magnifica subsp. Calyptogena magnifica.